Reading from the N-terminus, the 98-residue chain is NADH-ubiquinone oxidoreductase chain 4L (98 aa).

Transmembrane regions (helical) follow at residues 1 to 21 (MPLI…GLLM), 29 to 49 (ALLC…LLAL), and 61 to 81 (IILL…LVMI).

Belongs to the complex I subunit 4L family. As to quaternary structure, core subunit of respiratory chain NADH dehydrogenase (Complex I) which is composed of 45 different subunits.

Its subcellular location is the mitochondrion inner membrane. It carries out the reaction a ubiquinone + NADH + 5 H(+)(in) = a ubiquinol + NAD(+) + 4 H(+)(out). In terms of biological role, core subunit of the mitochondrial membrane respiratory chain NADH dehydrogenase (Complex I) which catalyzes electron transfer from NADH through the respiratory chain, using ubiquinone as an electron acceptor. Part of the enzyme membrane arm which is embedded in the lipid bilayer and involved in proton translocation. The polypeptide is NADH-ubiquinone oxidoreductase chain 4L (MT-ND4L) (Kogia breviceps (Pygmy sperm whale)).